Consider the following 263-residue polypeptide: NADH dehydrogenase [ubiquinone] iron-sulfur protein 3, mitochondrial (263 aa).

A mitochondrion-targeting transit peptide spans 1–35 (MVAAVARLWWRGLLGASALTRGAGRPSVLLLPVRR).

This sequence belongs to the complex I 30 kDa subunit family. As to quaternary structure, core subunit of respiratory chain NADH dehydrogenase (Complex I) which is composed of 45 different subunits. Interacts with NDUFAF3. Interacts with RAB5IF. Found in subcomplexes containing subunits NDUFS2, MT-ND1 and NDUFA13.

The protein localises to the mitochondrion inner membrane. It catalyses the reaction a ubiquinone + NADH + 5 H(+)(in) = a ubiquinol + NAD(+) + 4 H(+)(out). Its function is as follows. Core subunit of the mitochondrial membrane respiratory chain NADH dehydrogenase (Complex I) which catalyzes electron transfer from NADH through the respiratory chain, using ubiquinone as an electron acceptor. Essential for the catalytic activity and assembly of complex I. The chain is NADH dehydrogenase [ubiquinone] iron-sulfur protein 3, mitochondrial (NDUFS3) from Pongo pygmaeus (Bornean orangutan).